A 296-amino-acid chain; its full sequence is Ribonuclease HIII (296 aa).

Residues 81–296 enclose the RNase H type-2 domain; sequence QAMIGTDEVG…TQKAKQLLER (216 aa). The a divalent metal cation site is built by Asp-87, Glu-88, and Asp-190.

Belongs to the RNase HII family. RnhC subfamily. It depends on Mn(2+) as a cofactor. Mg(2+) is required as a cofactor.

It is found in the cytoplasm. The catalysed reaction is Endonucleolytic cleavage to 5'-phosphomonoester.. Functionally, endonuclease that specifically degrades the RNA of RNA-DNA hybrids. The polypeptide is Ribonuclease HIII (Streptococcus gordonii (strain Challis / ATCC 35105 / BCRC 15272 / CH1 / DL1 / V288)).